The sequence spans 167 residues: Plastocyanin major isoform, chloroplastic (167 aa).

Residues 1–52 (MASVTSATVAIPSFTGLKASTIKSSATVRIQTAAVASPKLTVKSSLKNFGVA) constitute a chloroplast transit peptide. Residues 53–68 (AVAAAASIALAGNAMA) constitute a thylakoid transit peptide. Residues 69–167 (IEVLLGGGDG…AGMVGKVTVN (99 aa)) enclose the Plastocyanin-like domain. Histidine 105, cysteine 152, histidine 155, and methionine 160 together coordinate Cu cation.

This sequence belongs to the plastocyanin family. Cu(2+) serves as cofactor.

It localises to the plastid. The protein resides in the chloroplast thylakoid membrane. Its function is as follows. Participates in electron transfer between P700 and the cytochrome b6-f complex in photosystem I. Seems to be the major plastocyanin in Arabidopsis. The chain is Plastocyanin major isoform, chloroplastic (DRT112) from Arabidopsis thaliana (Mouse-ear cress).